Here is a 92-residue protein sequence, read N- to C-terminus: Acylphosphatase (92 aa).

The cysteines at positions 5 and 49 are disulfide-linked. Positions 5–92 (CIIAWIYGRV…SGELTDFRIR (88 aa)) constitute an Acylphosphatase-like domain. Residues Arg-20 and Asn-38 contribute to the active site.

It belongs to the acylphosphatase family.

It catalyses the reaction an acyl phosphate + H2O = a carboxylate + phosphate + H(+). This is Acylphosphatase from Escherichia coli O1:K1 / APEC.